We begin with the raw amino-acid sequence, 244 residues long: MSQFNLSELNALPKAKQAAALVLVNGQLEHLTAQERVSWALDNLPGEFVLSSSFGIQAAVCLHLVTRQRPDIPVILTDTGYLFPETYRFIDDLTEKLQLNLQVFRAAHSPAWQEARYGKLWEQGVEGIERYNTLNKVEPMNRALEALGAQTWFAGLRREQSGGRSQLPVLALQRGIFKLLPIIDWDNRQVYQYLTQHGLSYHPLWEQGYLSVGDTHTTRKWEPGMSEEETRFFGLKRECGLHEG.

The active-site Nucleophile; cysteine thiosulfonate intermediate is C239.

Belongs to the PAPS reductase family. CysH subfamily.

It is found in the cytoplasm. It catalyses the reaction [thioredoxin]-disulfide + sulfite + adenosine 3',5'-bisphosphate + 2 H(+) = [thioredoxin]-dithiol + 3'-phosphoadenylyl sulfate. It participates in sulfur metabolism; hydrogen sulfide biosynthesis; sulfite from sulfate: step 3/3. Its function is as follows. Catalyzes the formation of sulfite from phosphoadenosine 5'-phosphosulfate (PAPS) using thioredoxin as an electron donor. This chain is Phosphoadenosine 5'-phosphosulfate reductase, found in Yersinia pseudotuberculosis serotype O:1b (strain IP 31758).